The chain runs to 64 residues: Defensin beta 4A (64 aa).

The signal sequence occupies residues 1–23 (MRVLYLLFSFLFIFLMPLPGVFG). Disulfide bonds link Cys31/Cys60, Cys38/Cys53, and Cys43/Cys61. The interval 33–48 (KSGAICHPVFCPRRYK) is phosphatidylinositol 4,5-bisphosphate (PIP2) binding.

This sequence belongs to the beta-defensin family. LAP/TAP subfamily. In terms of assembly, monomer. Homodimer. Expressed in lung epithelial cells (at protein level). Expressed in foreskin, lung and trachea. Lower expression in kidney, uterus and salivary gland tissue. Expressed in epithelial cells of the respiratory tract, with higher expression in distal parenchyma of the lung, trachea, and tonsils, and lower expression in pharynx and adenoid, and low expression in tongue and larynx.

The protein localises to the secreted. In terms of biological role, exhibits antimicrobial activity against Gram-negative bacteria and Gram-positive bacteria, with highest activity against Gram-negative bacteria. Antimicrobial activity against P.aruginosa seems to be salt-sensitive and is reduced with high salt concentrations greater than 25 mM. Also exhibits antimicrobial activity against the yeast C.albicans. Permeabilizes C.albicans cell membranes via targeting plasma membrane lipid phosphatidylinositol 4,5-bisphosphate (PIP2), thereby leading to cell fragmentation and cell death. Acts as a ligand for C-C chemokine receptor CCR6. Binds to CCR6 and induces chemotactic activity of CCR6-expressing cells, such as immature dendritic cells and memory T cells. The chain is Defensin beta 4A (DEFB4A) from Homo sapiens (Human).